A 118-amino-acid chain; its full sequence is Large ribosomal subunit protein bL17 (118 aa).

This sequence belongs to the bacterial ribosomal protein bL17 family. Part of the 50S ribosomal subunit. Contacts protein L32.

The chain is Large ribosomal subunit protein bL17 from Campylobacter concisus (strain 13826).